The sequence spans 577 residues: ABC transporter G family member 4 (577 aa).

Residues 6-248 (LSTSSISYAK…LLSKGFTVPS (243 aa)) enclose the ABC transporter domain. 48-55 (GPSGAGKS) contributes to the ATP binding site. One can recognise an ABC transmembrane type-2 domain in the interval 299-509 (TEISLLSSRF…ALDALLINEY (211 aa)). Helical transmembrane passes span 318-338 (LLLT…TIYL), 353-373 (LFAF…PIFI), 400-420 (VFLP…YFLV), 429-449 (LAYF…FVLF), 458-478 (IAGT…SGYF), 487-507 (YWLF…LLIN), and 548-568 (FNVY…FLVL).

Belongs to the ABC transporter superfamily. ABCG family. Eye pigment precursor importer (TC 3.A.1.204) subfamily.

Its subcellular location is the membrane. The chain is ABC transporter G family member 4 (ABCG4) from Arabidopsis thaliana (Mouse-ear cress).